The primary structure comprises 445 residues: Phosphoglucosamine mutase (445 aa).

The active-site Phosphoserine intermediate is the Ser-101. Mg(2+)-binding residues include Ser-101, Asp-240, Asp-242, and Asp-244. Ser-101 carries the phosphoserine modification.

Belongs to the phosphohexose mutase family. Requires Mg(2+) as cofactor. Post-translationally, activated by phosphorylation.

It carries out the reaction alpha-D-glucosamine 1-phosphate = D-glucosamine 6-phosphate. Catalyzes the conversion of glucosamine-6-phosphate to glucosamine-1-phosphate. The sequence is that of Phosphoglucosamine mutase from Azotobacter vinelandii (strain DJ / ATCC BAA-1303).